The sequence spans 200 residues: Shikimate kinase (200 aa).

Gly33–Thr38 provides a ligand contact to ATP. Residue Ser37 coordinates Mg(2+). Residues Asp55, Arg79, and Gly101 each coordinate substrate. Arg139 lines the ATP pocket. Substrate is bound at residue Arg158.

It belongs to the shikimate kinase family. As to quaternary structure, monomer. Mg(2+) serves as cofactor.

It localises to the cytoplasm. The enzyme catalyses shikimate + ATP = 3-phosphoshikimate + ADP + H(+). The protein operates within metabolic intermediate biosynthesis; chorismate biosynthesis; chorismate from D-erythrose 4-phosphate and phosphoenolpyruvate: step 5/7. In terms of biological role, catalyzes the specific phosphorylation of the 3-hydroxyl group of shikimic acid using ATP as a cosubstrate. In Brucella abortus (strain S19), this protein is Shikimate kinase.